The following is a 425-amino-acid chain: Enolase (425 aa).

Q165 contacts (2R)-2-phosphoglycerate. E207 (proton donor) is an active-site residue. Mg(2+)-binding residues include D244, E285, and D312. Positions 337, 366, 367, and 388 each coordinate (2R)-2-phosphoglycerate. The active-site Proton acceptor is the K337.

It belongs to the enolase family. Requires Mg(2+) as cofactor.

Its subcellular location is the cytoplasm. The protein resides in the secreted. It localises to the cell surface. The catalysed reaction is (2R)-2-phosphoglycerate = phosphoenolpyruvate + H2O. It participates in carbohydrate degradation; glycolysis; pyruvate from D-glyceraldehyde 3-phosphate: step 4/5. Its function is as follows. Catalyzes the reversible conversion of 2-phosphoglycerate (2-PG) into phosphoenolpyruvate (PEP). It is essential for the degradation of carbohydrates via glycolysis. This Wolbachia sp. subsp. Brugia malayi (strain TRS) protein is Enolase.